Consider the following 95-residue polypeptide: Aspartyl/glutamyl-tRNA(Asn/Gln) amidotransferase subunit C (95 aa).

This sequence belongs to the GatC family. In terms of assembly, heterotrimer of A, B and C subunits.

The enzyme catalyses L-glutamyl-tRNA(Gln) + L-glutamine + ATP + H2O = L-glutaminyl-tRNA(Gln) + L-glutamate + ADP + phosphate + H(+). The catalysed reaction is L-aspartyl-tRNA(Asn) + L-glutamine + ATP + H2O = L-asparaginyl-tRNA(Asn) + L-glutamate + ADP + phosphate + 2 H(+). Its function is as follows. Allows the formation of correctly charged Asn-tRNA(Asn) or Gln-tRNA(Gln) through the transamidation of misacylated Asp-tRNA(Asn) or Glu-tRNA(Gln) in organisms which lack either or both of asparaginyl-tRNA or glutaminyl-tRNA synthetases. The reaction takes place in the presence of glutamine and ATP through an activated phospho-Asp-tRNA(Asn) or phospho-Glu-tRNA(Gln). This chain is Aspartyl/glutamyl-tRNA(Asn/Gln) amidotransferase subunit C, found in Chlorobaculum tepidum (strain ATCC 49652 / DSM 12025 / NBRC 103806 / TLS) (Chlorobium tepidum).